The primary structure comprises 396 residues: Pyruvate synthase subunit PorA (396 aa).

As to quaternary structure, heterotetramer of one alpha, one beta, one delta and one gamma chain.

It catalyses the reaction 2 oxidized [2Fe-2S]-[ferredoxin] + pyruvate + CoA = 2 reduced [2Fe-2S]-[ferredoxin] + acetyl-CoA + CO2 + H(+). The polypeptide is Pyruvate synthase subunit PorA (porA) (Pyrococcus furiosus (strain ATCC 43587 / DSM 3638 / JCM 8422 / Vc1)).